We begin with the raw amino-acid sequence, 623 residues long: Regulatory solute carrier protein family 1 member 1 (623 aa).

Polar residues-rich tracts occupy residues Met-1–Pro-16, Cys-83–Pro-99, and Glu-133–Gln-144. 4 disordered regions span residues Met-1 to Ile-48, Arg-71 to Pro-99, Ser-116 to Asp-189, and Glu-433 to Thr-493. 3 stretches are compositionally biased toward basic and acidic residues: residues Ile-150 to Tyr-159, Gln-170 to Glu-180, and Leu-460 to Val-473. Positions Asn-474–His-491 are enriched in polar residues. Residues Ile-577–Lys-617 form the UBA domain.

Interacts with YRDC. Renal outer cortex and outer medulla, small intestine and liver.

It is found in the cell membrane. It localises to the nucleus. Its subcellular location is the golgi apparatus. The protein resides in the trans-Golgi network. Functionally, mediates transcriptional and post-transcriptional regulation of SLC5A1. Inhibits a dynamin and PKC-dependent exocytotic pathway of SLC5A1. Also involved in transcriptional regulation of SLC22A2. Exhibits glucose-dependent, short-term inhibition of SLC5A1 and SLC22A2 by inhibiting the release of vesicles from the trans-Golgi network. In Sus scrofa (Pig), this protein is Regulatory solute carrier protein family 1 member 1 (RSC1A1).